Here is a 115-residue protein sequence, read N- to C-terminus: Photosystem II reaction center Psb28 protein (115 aa).

This sequence belongs to the Psb28 family. In terms of assembly, part of the photosystem II complex.

Its subcellular location is the plastid. The protein resides in the chloroplast thylakoid membrane. This is Photosystem II reaction center Psb28 protein from Pyropia yezoensis (Susabi-nori).